The following is a 355-amino-acid chain: Phosphate acyltransferase (355 aa).

It belongs to the PlsX family. As to quaternary structure, homodimer. Probably interacts with PlsY.

Its subcellular location is the cytoplasm. The catalysed reaction is a fatty acyl-[ACP] + phosphate = an acyl phosphate + holo-[ACP]. It functions in the pathway lipid metabolism; phospholipid metabolism. In terms of biological role, catalyzes the reversible formation of acyl-phosphate (acyl-PO(4)) from acyl-[acyl-carrier-protein] (acyl-ACP). This enzyme utilizes acyl-ACP as fatty acyl donor, but not acyl-CoA. The chain is Phosphate acyltransferase from Rhodospirillum centenum (strain ATCC 51521 / SW).